The following is a 36-amino-acid chain: Peroxiredoxin-4 (36 aa).

The protein belongs to the peroxiredoxin family. AhpC/Prx1 subfamily. Homodimer; disulfide-linked, upon oxidation. Venom gland.

It localises to the secreted. The enzyme catalyses a hydroperoxide + [thioredoxin]-dithiol = an alcohol + [thioredoxin]-disulfide + H2O. Its function is as follows. Venom peroxiredoxin enzyme that may play a role as part of a redox pathway leading to the structural/functional diversification of toxins through a disulfide bond engineering mechanism. The polypeptide is Peroxiredoxin-4 (Crotalus atrox (Western diamondback rattlesnake)).